The chain runs to 234 residues: Elongation factor Tu (234 aa).

Positions K1 to E125 constitute a tr-type G domain. N47–D50 contacts GTP.

It belongs to the TRAFAC class translation factor GTPase superfamily. Classic translation factor GTPase family. EF-Tu/EF-1A subfamily. In terms of assembly, monomer.

The protein resides in the cytoplasm. It carries out the reaction GTP + H2O = GDP + phosphate + H(+). Functionally, GTP hydrolase that promotes the GTP-dependent binding of aminoacyl-tRNA to the A-site of ribosomes during protein biosynthesis. The sequence is that of Elongation factor Tu (tufA) from Prochlorothrix hollandica.